Consider the following 594-residue polypeptide: UvrABC system protein C (594 aa).

Residues 14–91 form the GIY-YIG domain; that stretch reads DSPGCYLHKD…IQENMPKYNI (78 aa). The 36-residue stretch at 196 to 231 folds into the UVR domain; that stretch reads DKIIDDLRSKMLEASHNQEFERAAEYRDLISGIATM.

The protein belongs to the UvrC family. In terms of assembly, interacts with UvrB in an incision complex.

Its subcellular location is the cytoplasm. Its function is as follows. The UvrABC repair system catalyzes the recognition and processing of DNA lesions. UvrC both incises the 5' and 3' sides of the lesion. The N-terminal half is responsible for the 3' incision and the C-terminal half is responsible for the 5' incision. The polypeptide is UvrABC system protein C (Streptococcus equi subsp. zooepidemicus (strain H70)).